A 365-amino-acid chain; its full sequence is Phosphate acyltransferase (365 aa).

Belongs to the PlsX family. In terms of assembly, homodimer. Probably interacts with PlsY.

The protein localises to the cytoplasm. It carries out the reaction a fatty acyl-[ACP] + phosphate = an acyl phosphate + holo-[ACP]. It functions in the pathway lipid metabolism; phospholipid metabolism. Its function is as follows. Catalyzes the reversible formation of acyl-phosphate (acyl-PO(4)) from acyl-[acyl-carrier-protein] (acyl-ACP). This enzyme utilizes acyl-ACP as fatty acyl donor, but not acyl-CoA. This is Phosphate acyltransferase from Klebsiella pneumoniae (strain 342).